Reading from the N-terminus, the 322-residue chain is Lymphatic vessel endothelial hyaluronic acid receptor 1 (322 aa).

Positions 1–19 (MARCFSLVLLLTSIWTTRL) are cleaved as a signal peptide. At 20–238 (LVQGSLRAEE…EAAGFGGVPT (219 aa)) the chain is on the extracellular side. One can recognise a Link domain in the interval 40–130 (GITLVSKKAN…SRQFAAYCYN (91 aa)). A glycan (N-linked (GlcNAc...) asparagine) is linked at Asn53. 2 disulfides stabilise this stretch: Cys61–Cys128 and Cys85–Cys106. Residue Asn130 is glycosylated (N-linked (GlcNAc...) asparagine). The helical transmembrane segment at 239–259 (ALLVLALLFFGAAAGLGFCYV) threads the bilayer. The Cytoplasmic portion of the chain corresponds to 260-322 (KRYVKAFPFT…TTVRCLEAEV (63 aa)). A compositionally biased stretch (basic and acidic residues) spans 279 to 309 (ETKVVKEEKANDSNPNEESKKTDKNPEESKS). Residues 279-322 (ETKVVKEEKANDSNPNEESKKTDKNPEESKSPSKTTVRCLEAEV) are disordered.

Homodimer; disulfide-linked. Interacts with PDGFB and IGFBP3. Forms a transient ternary complex with PDGFB and PDGFRB in TGN. O-glycosylated. As to expression, mainly expressed in endothelial cells lining lymphatic vessels.

It is found in the cell membrane. Its function is as follows. Ligand-specific transporter trafficking between intracellular organelles (TGN) and the plasma membrane. Plays a role in autocrine regulation of cell growth mediated by growth regulators containing cell surface retention sequence binding (CRS). May act as a hyaluronan (HA) transporter, either mediating its uptake for catabolism within lymphatic endothelial cells themselves, or its transport into the lumen of afferent lymphatic vessels for subsequent re-uptake and degradation in lymph nodes. Binds to pericelluar hyaluronan matrices deposited on the surface of leukocytes and facilitates cell adhesion and migration through lymphatic endothelium. The chain is Lymphatic vessel endothelial hyaluronic acid receptor 1 (LYVE1) from Homo sapiens (Human).